Reading from the N-terminus, the 300-residue chain is 4-hydroxybenzoate octaprenyltransferase (300 aa).

8 consecutive transmembrane segments (helical) span residues 32 to 52, 55 to 75, 108 to 128, 149 to 169, 178 to 198, 222 to 242, 246 to 266, and 278 to 298; these read IGTY…SEGA, LKNL…GCVI, LFGI…ALTI, YLPQ…AFAA, AWLL…MYAM, AAVA…GAQH, VYYQ…QHLI, and FLNN…EFLF.

The protein belongs to the UbiA prenyltransferase family. Requires Mg(2+) as cofactor.

The protein localises to the cell inner membrane. It carries out the reaction all-trans-octaprenyl diphosphate + 4-hydroxybenzoate = 4-hydroxy-3-(all-trans-octaprenyl)benzoate + diphosphate. It functions in the pathway cofactor biosynthesis; ubiquinone biosynthesis. Functionally, catalyzes the prenylation of para-hydroxybenzoate (PHB) with an all-trans polyprenyl group. Mediates the second step in the final reaction sequence of ubiquinone-8 (UQ-8) biosynthesis, which is the condensation of the polyisoprenoid side chain with PHB, generating the first membrane-bound Q intermediate 3-octaprenyl-4-hydroxybenzoate. This Hahella chejuensis (strain KCTC 2396) protein is 4-hydroxybenzoate octaprenyltransferase.